The following is a 300-amino-acid chain: NAD kinase (300 aa).

Asp75 functions as the Proton acceptor in the catalytic mechanism. NAD(+) contacts are provided by residues 75–76 (DG), 149–150 (ND), Arg177, Asp179, 190–195 (TAYALS), Ala214, and Gln248.

Belongs to the NAD kinase family. Requires a divalent metal cation as cofactor.

It localises to the cytoplasm. The enzyme catalyses NAD(+) + ATP = ADP + NADP(+) + H(+). Its function is as follows. Involved in the regulation of the intracellular balance of NAD and NADP, and is a key enzyme in the biosynthesis of NADP. Catalyzes specifically the phosphorylation on 2'-hydroxyl of the adenosine moiety of NAD to yield NADP. This chain is NAD kinase, found in Burkholderia cenocepacia (strain ATCC BAA-245 / DSM 16553 / LMG 16656 / NCTC 13227 / J2315 / CF5610) (Burkholderia cepacia (strain J2315)).